Here is a 1213-residue protein sequence, read N- to C-terminus: DNA-directed RNA polymerase subunit beta' (1213 aa).

Zn(2+) is bound by residues Cys60, Cys62, Cys75, and Cys78. Residues Asp450, Asp452, and Asp454 each coordinate Mg(2+). 4 residues coordinate Zn(2+): Cys819, Cys893, Cys900, and Cys903.

The protein belongs to the RNA polymerase beta' chain family. In terms of assembly, the RNAP catalytic core consists of 2 alpha, 1 beta, 1 beta' and 1 omega subunit. When a sigma factor is associated with the core the holoenzyme is formed, which can initiate transcription. Mg(2+) is required as a cofactor. The cofactor is Zn(2+).

It catalyses the reaction RNA(n) + a ribonucleoside 5'-triphosphate = RNA(n+1) + diphosphate. Its function is as follows. DNA-dependent RNA polymerase catalyzes the transcription of DNA into RNA using the four ribonucleoside triphosphates as substrates. The sequence is that of DNA-directed RNA polymerase subunit beta' from Streptococcus pyogenes serotype M28 (strain MGAS6180).